We begin with the raw amino-acid sequence, 358 residues long: MSTRVVVGLSGGVDSAVAAYLLKQQGYDVLGVFMKNWDDDDNTEHCTARQDFLDVLAVADVLGIEVEAVNFAAEYKERVFSYFLAEYQAGRTPNPDVLCNAEIKFKAFLDDAIARGADYIATGHYVGKGHDTFGRAALLRARDANKDQSYFLYRLNQAQLSPALFPLARLPKPEVREIARRIGLPNAAKKDSTGICFIGERNFREFLERYLPRDPGDMTTPEGRVVGQHQGLMYYTLGQRQGLGIGGQKGGSDAPWFVAAKDMATNTLVVVQGHDHPLLQRFGVGAGQLSWIAGVAPDPERPYTAKTRYRQTDAACHITTLYDDTLELVFDAPQWAVTPGQSVVLYDGDVCLGGGIIC.

ATP is bound by residues 8 to 15 (GLSGGVDS) and Met34. An interaction with target base in tRNA region spans residues 94–96 (NPD). The active-site Nucleophile is Cys99. The cysteines at positions 99 and 196 are disulfide-linked. Residue Gly123 participates in ATP binding. The segment at 146-148 (KDQ) is interaction with tRNA. Cys196 functions as the Cysteine persulfide intermediate in the catalytic mechanism. The segment at 308–309 (RY) is interaction with tRNA.

It belongs to the MnmA/TRMU family.

The protein resides in the cytoplasm. It carries out the reaction S-sulfanyl-L-cysteinyl-[protein] + uridine(34) in tRNA + AH2 + ATP = 2-thiouridine(34) in tRNA + L-cysteinyl-[protein] + A + AMP + diphosphate + H(+). Functionally, catalyzes the 2-thiolation of uridine at the wobble position (U34) of tRNA, leading to the formation of s(2)U34. In Thiobacillus denitrificans (strain ATCC 25259 / T1), this protein is tRNA-specific 2-thiouridylase MnmA.